A 656-amino-acid chain; its full sequence is L-type lectin-domain containing receptor kinase S.1 (656 aa).

The N-terminal stretch at 1–29 (MSWQWRRRQWPSPLLLILIVLHLVSSSSA) is a signal peptide. The tract at residues 30-273 (IDFLYNSFSS…ARRILAWSLS (244 aa)) is legume-lectin like. Residues 30 to 304 (IDFLYNSFSS…SSSLSTGAIA (275 aa)) are Extracellular-facing. 8 N-linked (GlcNAc...) asparagine glycosylation sites follow: Asn42, Asn63, Asn121, Asn139, Asn191, Asn219, Asn282, and Asn293. Residues 305-325 (GIVIGCVVFVALIGFGGYLIW) traverse the membrane as a helical segment. Residues 326-656 (KKLMREEEEE…AAADSTAAHA (331 aa)) lie on the Cytoplasmic side of the membrane. The region spanning 361–639 (FSNDRLLGSG…LLGSPQEDLL (279 aa)) is the Protein kinase domain. Residues 367–375 (LGSGGFGKV) and Lys389 contribute to the ATP site. Asp485 acts as the Proton acceptor in catalysis.

In the C-terminal section; belongs to the protein kinase superfamily. Ser/Thr protein kinase family. It in the N-terminal section; belongs to the leguminous lectin family.

The protein resides in the cell membrane. The catalysed reaction is L-seryl-[protein] + ATP = O-phospho-L-seryl-[protein] + ADP + H(+). It catalyses the reaction L-threonyl-[protein] + ATP = O-phospho-L-threonyl-[protein] + ADP + H(+). Its function is as follows. Involved in resistance response to the pathogenic oomycetes Phytophthora infestans and Phytophthora capsici and to the pathogenic bacteria Pseudomonas syringae. This is L-type lectin-domain containing receptor kinase S.1 from Arabidopsis thaliana (Mouse-ear cress).